We begin with the raw amino-acid sequence, 88 residues long: Cell division topological specificity factor (88 aa).

The protein belongs to the MinE family.

In terms of biological role, prevents the cell division inhibition by proteins MinC and MinD at internal division sites while permitting inhibition at polar sites. This ensures cell division at the proper site by restricting the formation of a division septum at the midpoint of the long axis of the cell. The chain is Cell division topological specificity factor from Escherichia coli (strain SMS-3-5 / SECEC).